The chain runs to 161 residues: 6,7-dimethyl-8-ribityllumazine synthase (161 aa).

Residues Trp-26, 58–60, and 81–83 each bind 5-amino-6-(D-ribitylamino)uracil; these read AFE and VVI. Residue 86-87 participates in (2S)-2-hydroxy-3-oxobutyl phosphate binding; the sequence is GT. The Proton donor role is filled by His-89. Residue Phe-114 participates in 5-amino-6-(D-ribitylamino)uracil binding. Residue Arg-128 coordinates (2S)-2-hydroxy-3-oxobutyl phosphate.

This sequence belongs to the DMRL synthase family.

The catalysed reaction is (2S)-2-hydroxy-3-oxobutyl phosphate + 5-amino-6-(D-ribitylamino)uracil = 6,7-dimethyl-8-(1-D-ribityl)lumazine + phosphate + 2 H2O + H(+). Its pathway is cofactor biosynthesis; riboflavin biosynthesis; riboflavin from 2-hydroxy-3-oxobutyl phosphate and 5-amino-6-(D-ribitylamino)uracil: step 1/2. Catalyzes the formation of 6,7-dimethyl-8-ribityllumazine by condensation of 5-amino-6-(D-ribitylamino)uracil with 3,4-dihydroxy-2-butanone 4-phosphate. This is the penultimate step in the biosynthesis of riboflavin. The protein is 6,7-dimethyl-8-ribityllumazine synthase of Nocardioides sp. (strain ATCC BAA-499 / JS614).